Here is a 967-residue protein sequence, read N- to C-terminus: Isoleucine--tRNA ligase (967 aa).

The 'HIGH' region signature appears at 68-78; that stretch reads PYANGTLHMGH. L-isoleucyl-5'-AMP is bound at residue glutamate 583. The 'KMSKS' region signature appears at 624–628; the sequence is KMSKS. Position 627 (lysine 627) interacts with ATP. Positions 937, 940, 957, and 960 each coordinate Zn(2+).

This sequence belongs to the class-I aminoacyl-tRNA synthetase family. IleS type 1 subfamily. In terms of assembly, monomer. It depends on Zn(2+) as a cofactor.

It is found in the cytoplasm. The enzyme catalyses tRNA(Ile) + L-isoleucine + ATP = L-isoleucyl-tRNA(Ile) + AMP + diphosphate. Its function is as follows. Catalyzes the attachment of isoleucine to tRNA(Ile). As IleRS can inadvertently accommodate and process structurally similar amino acids such as valine, to avoid such errors it has two additional distinct tRNA(Ile)-dependent editing activities. One activity is designated as 'pretransfer' editing and involves the hydrolysis of activated Val-AMP. The other activity is designated 'posttransfer' editing and involves deacylation of mischarged Val-tRNA(Ile). This chain is Isoleucine--tRNA ligase, found in Prochlorococcus marinus (strain NATL2A).